Consider the following 99-residue polypeptide: NADH-quinone oxidoreductase subunit K (99 aa).

The next 3 helical transmembrane spans lie at 3–23, 28–48, and 59–79; these read ILFS…GILI, LIVF…FVAF, and IWVF…LAII.

The protein belongs to the complex I subunit 4L family. As to quaternary structure, NDH-1 is composed of 14 different subunits. Subunits NuoA, H, J, K, L, M, N constitute the membrane sector of the complex.

Its subcellular location is the cell inner membrane. The enzyme catalyses a quinone + NADH + 5 H(+)(in) = a quinol + NAD(+) + 4 H(+)(out). Functionally, NDH-1 shuttles electrons from NADH, via FMN and iron-sulfur (Fe-S) centers, to quinones in the respiratory chain. The immediate electron acceptor for the enzyme in this species is believed to be ubiquinone. Couples the redox reaction to proton translocation (for every two electrons transferred, four hydrogen ions are translocated across the cytoplasmic membrane), and thus conserves the redox energy in a proton gradient. The polypeptide is NADH-quinone oxidoreductase subunit K (Protochlamydia amoebophila (strain UWE25)).